A 542-amino-acid chain; its full sequence is MAAKEVKFHSDARERMLRGVDVLANAVKVTLGPKGRNVVIDKSFGAPRITKDGVSVAKEIELEDKFENMGAQMLREVASKTNDLAGDGTTTATVLAQAIVKEGAKAVASGMNPMDLKRGIDLAVDAVVGELKANARKISNNSEIAQVGTISANGDAEIGRYLAEAMEKVGNEGVITVEEAKTAETELEVVEGMQFDRGYLSPYFVTNQDKMRVELEDPYILIHEKKLSNLQSMLPVLEAVVQSGKPLLIIAEDVEGEALATLVVNKLRGGLKIAAVKAPGFGDRRKAMLEDIAILTAGTVISEDLGIKLENVTLNMLGRAKKVAIEKENTTIIDGAGSKAELDGRTAQIRAQIEETTSDYDREKLQERLAKLAGGVAVIRVGGSTEVEVKEKKDRVDDALHATRAAVEEGILPGGGVALLRAVKALDSIKTANDDQRVGVDIVRRAIEAPVRQIAENAGAEGSIIVGKLREKSDFSYGWNAQTGEYGDLYAQGVIDPAKVVRTALQDAASVAGLLVTTEAMIAEKPKKEAAPAMPAGAGMDF.

ATP-binding positions include T30 to P33, K51, D87 to T91, G415, and D496.

The protein belongs to the chaperonin (HSP60) family. In terms of assembly, forms a cylinder of 14 subunits composed of two heptameric rings stacked back-to-back. Interacts with the co-chaperonin GroES.

It is found in the cytoplasm. It carries out the reaction ATP + H2O + a folded polypeptide = ADP + phosphate + an unfolded polypeptide.. Functionally, together with its co-chaperonin GroES, plays an essential role in assisting protein folding. The GroEL-GroES system forms a nano-cage that allows encapsulation of the non-native substrate proteins and provides a physical environment optimized to promote and accelerate protein folding. In Rhizobium etli (strain ATCC 51251 / DSM 11541 / JCM 21823 / NBRC 15573 / CFN 42), this protein is Chaperonin GroEL 2.